The chain runs to 1290 residues: MNFLSFKTTKHYHIFRYVNIRNDYRLLMIMIIGTVATGLVPAITSILTGRVFDLLSVFVANGSHQGLYSQLVQRSMAVMALGAASVPVMWLSLTSWMHIGERQGFRIRSQILEAYLEEKPMEWYDNNEKLLGDFTQINRCVEELRSSSAEASAITFQNLVAICALLGTSFYYSWSLTLIILCSSPIITFFAVVFSRMIHVYSEKENSETSKAAQLLTWSMNAAQLVRLYCTQRLERKKFKEIILNCNTFFIKSCFFVAANAGILRFLTLTMFVQGFWFGSAMIKKGKLNINDVITCFHSCIMLGSTLNNTLHQIVVLQKGGVAMEKIMTLLKDGSKRNPLNKTVAHQFPLDYATSDLTFANVSFSYPSRPSEAVLKNVSLNFSAGQFTFIVGKSGSGKSTLSNLLLRFYDGYNGSISINGHNIQTIDQKLLIENITVVEQRCTLFNDTLRKNILLGSTDSVRNADCSTNENRHLIKDACQMALLDRFILDLPDGLETLIGTGGVTLSGGQQQRVAIARAFIRDTPILFLDEAVSALDIVHRNLLMKAIRHWRKGKTTIILTHELSQIESDDYLYLMKEGEVVESGTQSELLADPTTTFSTWYHLQNDYSDAKTIVDTETEEKSIHTVESFNSQLETPKLGSCLSNLGYDETDQLSFYEAIYQKRSNVRTRRVKVEEENIGYALKQQKNTESSTGPQLLSIIQIIKRMIKSIRYKKILILGLLCSLIAGATNPVFSYTFSFLLEGIVPSTDGKTGSSHYLAKWSLLVLGVAAADGIFNFAKGFLLDCCSEYWVMDLRNEVMEKLTRKNMDWFSGENNKASEISALVLNDLRDLRSLVSEFLSAMTSFVTVSTIGLIWALVSGWKLSLVCISMFPLIIIFSAIYGGILQKCETDYKTSVAQLENCLYQIVTNIKTIKCLQAEFHFQLTYHDLKIKMQQIASKRAIATGFGISMTNMIVMCIQAIIYYYGLKLVMIHEYTSKEMFTTFTLLLFTIMSCTSLVSQIPDISRGQRAASWIYRILDEKHNTLEVENNNARTVGIAGHTYHGKEKKPIVSIQNLTFAYPSAPTAFVYKNMNFDMFCGQTLGIIGESGTGKSTLVLLLTKLYNCEVGKIKIDGTDVNDWNLTSLRKEISVVEQKPLLFNGTIRDNLTYGLQDEILEIEMYDALKYVGIHDFVISSPQGLDTRIDTTLLSGGQAQRLCIARALLRKSKILILDECTSALDSVSSSIINEIVKKGPPALLTMVITHSEQMMRSCNSIAVLKDGKVVERGNFDTLYNNRGELFQIVSNQSS.

At 1 to 25 (MNFLSFKTTKHYHIFRYVNIRNDYR) the chain is on the cytoplasmic side. Residues 26–46 (LLMIMIIGTVATGLVPAITSI) traverse the membrane as a helical segment. Residues 27–319 (LMIMIIGTVA…TLHQIVVLQK (293 aa)) enclose the ABC transmembrane type-1 1 domain. Residues 47–75 (LTGRVFDLLSVFVANGSHQGLYSQLVQRS) lie on the Extracellular side of the membrane. N61 carries an N-linked (GlcNAc...) asparagine glycan. Residues 76 to 96 (MAVMALGAASVPVMWLSLTSW) traverse the membrane as a helical segment. The Cytoplasmic portion of the chain corresponds to 97–150 (MHIGERQGFRIRSQILEAYLEEKPMEWYDNNEKLLGDFTQINRCVEELRSSSAE). The chain crosses the membrane as a helical span at residues 151–171 (ASAITFQNLVAICALLGTSFY). Residues 172–173 (YS) lie on the Extracellular side of the membrane. A helical transmembrane segment spans residues 174 to 194 (WSLTLIILCSSPIITFFAVVF). Over 195–262 (SRMIHVYSEK…SCFFVAANAG (68 aa)) the chain is Cytoplasmic. Residues 263–283 (ILRFLTLTMFVQGFWFGSAMI) traverse the membrane as a helical segment. At 284–296 (KKGKLNINDVITC) the chain is on the extracellular side. The chain crosses the membrane as a helical span at residues 297–317 (FHSCIMLGSTLNNTLHQIVVL). The Cytoplasmic segment spans residues 318–715 (QKGGVAMEKI…RMIKSIRYKK (398 aa)). In terms of domain architecture, ABC transporter 1 spans 357 to 603 (LTFANVSFSY…PTTTFSTWYH (247 aa)). Residue 392–399 (GKSGSGKS) coordinates ATP. Residues 716–736 (ILILGLLCSLIAGATNPVFSY) traverse the membrane as a helical segment. Residues 717-1007 (LILGLLCSLI…LVSQIPDISR (291 aa)) form the ABC transmembrane type-1 2 domain. Topologically, residues 737 to 763 (TFSFLLEGIVPSTDGKTGSSHYLAKWS) are extracellular. The helical transmembrane segment at 764 to 784 (LLVLGVAAADGIFNFAKGFLL) threads the bilayer. Topologically, residues 785-838 (DCCSEYWVMDLRNEVMEKLTRKNMDWFSGENNKASEISALVLNDLRDLRSLVSE) are cytoplasmic. A helical transmembrane segment spans residues 839 to 859 (FLSAMTSFVTVSTIGLIWALV). The Extracellular portion of the chain corresponds to 860–865 (SGWKLS). A helical transmembrane segment spans residues 866 to 886 (LVCISMFPLIIIFSAIYGGIL). Topologically, residues 887 to 945 (QKCETDYKTSVAQLENCLYQIVTNIKTIKCLQAEFHFQLTYHDLKIKMQQIASKRAIAT) are cytoplasmic. Residues 946–966 (GFGISMTNMIVMCIQAIIYYY) traverse the membrane as a helical segment. Residues 967-981 (GLKLVMIHEYTSKEM) lie on the Extracellular side of the membrane. A helical transmembrane segment spans residues 982 to 1002 (FTTFTLLLFTIMSCTSLVSQI). Residues 1003 to 1290 (PDISRGQRAA…LFQIVSNQSS (288 aa)) lie on the Cytoplasmic side of the membrane. K1022 participates in a covalent cross-link: Glycyl lysine isopeptide (Lys-Gly) (interchain with G-Cter in ubiquitin). Positions 1052–1287 (VSIQNLTFAY…RGELFQIVSN (236 aa)) constitute an ABC transporter 2 domain. An ATP-binding site is contributed by 1087–1094 (GESGTGKS).

Belongs to the ABC transporter superfamily. Alpha-factor sex pheromone exporter (TC 3.A.1.206) family. Degraded via the ubiquitin system.

The protein localises to the membrane. The enzyme catalyses an [alpha-factor](in) + ATP + H2O = an [alpha-factor](out) + ADP + phosphate + H(+). In terms of biological role, STE6 is required in yeast MATA cells for production of A-factor pheromone. STE6 is involved in the transport of the farnesyl-derivation of the A-factor pheromone. The protein is Alpha-factor-transporting ATPase (STE6) of Saccharomyces cerevisiae (strain ATCC 204508 / S288c) (Baker's yeast).